The following is a 197-amino-acid chain: Rac-like GTP-binding protein RHO1 (197 aa).

Residue 13–20 (GDGAVGKT) coordinates GTP. The short motif at 35 to 43 (YVPTVFDNF) is the Effector region element. GTP contacts are provided by residues 60–64 (DTAGQ) and 118–121 (TKLD). At Cys-194 the chain carries Cysteine methyl ester. Cys-194 carries S-geranylgeranyl cysteine lipidation. Residues 195 to 197 (SIL) constitute a propeptide, removed in mature form.

Belongs to the small GTPase superfamily. Rho family. In terms of tissue distribution, expressed at the tip of pollen tubes.

The protein localises to the cytoplasm. It localises to the membrane. Inactive GDP-bound Rho GTPases reside in the cytosol, are found in a complex with Rho GDP-dissociation inhibitors (Rho GDIs), and are released from the GDI protein in order to translocate to membranes upon activation. May be involved in cell polarity control during the actin-dependent tip growth of pollen tubes. The sequence is that of Rac-like GTP-binding protein RHO1 (RHO1) from Pisum sativum (Garden pea).